Consider the following 730-residue polypeptide: Elongation factor 2 (730 aa).

Residues Val19–Ile260 enclose the tr-type G domain. Residues Ala28 to Thr35, Asp94 to His98, and Asn148 to Asp151 contribute to the GTP site. Diphthamide is present on His596.

It belongs to the TRAFAC class translation factor GTPase superfamily. Classic translation factor GTPase family. EF-G/EF-2 subfamily.

It localises to the cytoplasm. Functionally, catalyzes the GTP-dependent ribosomal translocation step during translation elongation. During this step, the ribosome changes from the pre-translocational (PRE) to the post-translocational (POST) state as the newly formed A-site-bound peptidyl-tRNA and P-site-bound deacylated tRNA move to the P and E sites, respectively. Catalyzes the coordinated movement of the two tRNA molecules, the mRNA and conformational changes in the ribosome. In Methanococcoides methylutens, this protein is Elongation factor 2 (fusA).